Here is a 251-residue protein sequence, read N- to C-terminus: Triosephosphate isomerase (251 aa).

8 to 10 serves as a coordination point for substrate; the sequence is NWK. Residue His-97 is the Electrophile of the active site. Glu-170 acts as the Proton acceptor in catalysis. Substrate contacts are provided by residues Gly-176, Ser-215, and 236–237; that span reads GG.

Belongs to the triosephosphate isomerase family. As to quaternary structure, homodimer.

The protein localises to the cytoplasm. The catalysed reaction is D-glyceraldehyde 3-phosphate = dihydroxyacetone phosphate. Its pathway is carbohydrate biosynthesis; gluconeogenesis. The protein operates within carbohydrate degradation; glycolysis; D-glyceraldehyde 3-phosphate from glycerone phosphate: step 1/1. Involved in the gluconeogenesis. Catalyzes stereospecifically the conversion of dihydroxyacetone phosphate (DHAP) to D-glyceraldehyde-3-phosphate (G3P). This is Triosephosphate isomerase from Nitratidesulfovibrio vulgaris (strain ATCC 29579 / DSM 644 / CCUG 34227 / NCIMB 8303 / VKM B-1760 / Hildenborough) (Desulfovibrio vulgaris).